The sequence spans 377 residues: Histone deacetylase 8 (377 aa).

The histone deacetylase stretch occupies residues 14–324; sequence LPPVYIYSPE…WTYLTGVILG (311 aa). At serine 39 the chain carries Phosphoserine. Aspartate 101 contributes to the substrate binding site. Histidine 143 serves as the catalytic Proton acceptor. Position 151 (glycine 151) interacts with substrate. The a divalent metal cation site is built by aspartate 178, histidine 180, and aspartate 267. A substrate-binding site is contributed by tyrosine 306.

Belongs to the histone deacetylase family. HD type 1 subfamily. As to quaternary structure, interacts with CBFA2T3. Interacts with phosphorylated SMG5/EST1B; this interaction protects SMG5 from ubiquitin-mediated degradation. Associates with alpha-SMA (smooth muscle alpha-actin). A divalent metal cation serves as cofactor. In terms of processing, phosphorylated by PKA on serine 39. Phosphorylation reduces deacetylase activity observed preferentially on histones H3 and H4.

The protein resides in the nucleus. It is found in the chromosome. Its subcellular location is the cytoplasm. The catalysed reaction is N(6)-acetyl-L-lysyl-[histone] + H2O = L-lysyl-[histone] + acetate. It catalyses the reaction N(6)-acetyl-L-lysyl-[protein] + H2O = L-lysyl-[protein] + acetate. It carries out the reaction N(6)-(2E)-butenoyl-L-lysyl-[protein] + H2O = (2E)-2-butenoate + L-lysyl-[protein]. With respect to regulation, its activity is inhibited by trichostatin A (TSA) and butyrate, 2 well known histone deacetylase inhibitors. Histone deacetylase that catalyzes the deacetylation of lysine residues on the N-terminal part of the core histones (H2A, H2B, H3 and H4). Histone deacetylation gives a tag for epigenetic repression and plays an important role in transcriptional regulation, cell cycle progression and developmental events. Histone deacetylases act via the formation of large multiprotein complexes. Also involved in the deacetylation of cohesin complex protein SMC3 regulating release of cohesin complexes from chromatin. May play a role in smooth muscle cell contractility. In addition to protein deacetylase activity, also has protein-lysine deacylase activity: acts as a protein decrotonylase by mediating decrotonylation ((2E)-butenoyl) of histones. The sequence is that of Histone deacetylase 8 (Hdac8) from Rattus norvegicus (Rat).